The primary structure comprises 513 residues: MVWYSSCRILFLGLLILLASSWVLDRCEGFGEFGFEFHHRFSDQVVGVLPGDGLPNRDSSKYYRVMAHRDRLIRGRRLANEDQSLVTFSDGNETVRVDALGFLHYANVTVGTPSDWFMVALDTGSDLFWLPCDCTNCVRELKAPGGSSLDLNIYSPNASSTSTKVPCNSTLCTRGDRCASPESDCPYQIRYLSNGTSSTGVLVEDVLHLVSNDKSSKAIPARVTFGCGQVQTGVFHDGAAPNGLFGLGLEDISVPSVLAKEGIAANSFSMCFGNDGAGRISFGDKGSVDQRETPLNIRQPHPTYNITVTKISVGGNTGDLEFDAVFDSGTSFTYLTDAAYTLISESFNSLALDKRYQTTDSELPFEYCYALSPNKDSFQYPAVNLTMKGGSSYPVYHPLVVIPMKDTDVYCLAIMKIEDISIIGQNFMTGYRVVFDREKLILGWKESDCYTGETSARTLPSNRSSSSARPPASSFDPEATNIPSQRPNTSTTSAAYSLSISLSLFFFSILAIL.

The signal sequence occupies residues 1–21; it reads MVWYSSCRILFLGLLILLASS. A Peptidase A1 domain is found at 104-445; the sequence is HYANVTVGTP…DREKLILGWK (342 aa). Active-site residues include aspartate 122 and aspartate 327. The interval 452-488 is disordered; sequence GETSARTLPSNRSSSSARPPASSFDPEATNIPSQRPN. Low complexity predominate over residues 455 to 474; it reads SARTLPSNRSSSSARPPASS. Residue serine 484 is the site of GPI-anchor amidated serine attachment. The propeptide at 485–513 is removed in mature form; that stretch reads QRPNTSTTSAAYSLSISLSLFFFSILAIL.

The protein belongs to the peptidase A1 family.

The protein localises to the cell membrane. Functionally, aspartyl protease. Not able to cleave BAG6. This is Aspartyl protease family protein 1 from Arabidopsis thaliana (Mouse-ear cress).